Here is a 513-residue protein sequence, read N- to C-terminus: GMP synthase [glutamine-hydrolyzing] (513 aa).

Positions 9-198 (LILVLDFGSQ…VRRVCDCKGQ (190 aa)) constitute a Glutamine amidotransferase type-1 domain. The active-site Nucleophile is the Cys-86. Active-site residues include His-172 and Glu-174. A GMPS ATP-PPase domain is found at 199–388 (WTMENFIEIE…LGIPEHLVWR (190 aa)). 226–232 (SGGVDSS) serves as a coordination point for ATP.

As to quaternary structure, homodimer.

The enzyme catalyses XMP + L-glutamine + ATP + H2O = GMP + L-glutamate + AMP + diphosphate + 2 H(+). Its pathway is purine metabolism; GMP biosynthesis; GMP from XMP (L-Gln route): step 1/1. In terms of biological role, catalyzes the synthesis of GMP from XMP. In Staphylococcus aureus (strain Mu3 / ATCC 700698), this protein is GMP synthase [glutamine-hydrolyzing].